Reading from the N-terminus, the 369-residue chain is Allantoicase (369 aa).

Residues 341-369 (PDSKNNNNNNNNNNNNNTSNSFKTSDRQQ) form a disordered region. A compositionally biased stretch (low complexity) spans 345–357 (NNNNNNNNNNNNN).

The protein belongs to the allantoicase family.

The catalysed reaction is allantoate + H2O = (S)-ureidoglycolate + urea. It participates in nitrogen metabolism; (S)-allantoin degradation; (S)-ureidoglycolate from allantoate (aminidohydrolase route): step 1/1. In terms of biological role, utilization of purines as secondary nitrogen sources, when primary sources are limiting. This Dictyostelium discoideum (Social amoeba) protein is Allantoicase (allC).